The sequence spans 376 residues: Chaperone protein DnaJ (376 aa).

The J domain maps to 5–70; the sequence is DYYEILGVSK…QKRAAYDQYG (66 aa). The CR-type zinc-finger motif lies at 131–209; sequence GVTKEIRIPT…CHGHGRVERS (79 aa). Cys-144, Cys-147, Cys-161, Cys-164, Cys-183, Cys-186, Cys-197, and Cys-200 together coordinate Zn(2+). CXXCXGXG motif repeat units follow at residues 144 to 151, 161 to 168, 183 to 190, and 197 to 204; these read CDVCHGSG, CPTCHGSG, CPHCQGRG, and CNKCHGHG.

It belongs to the DnaJ family. In terms of assembly, homodimer. Zn(2+) serves as cofactor.

It is found in the cytoplasm. Participates actively in the response to hyperosmotic and heat shock by preventing the aggregation of stress-denatured proteins and by disaggregating proteins, also in an autonomous, DnaK-independent fashion. Unfolded proteins bind initially to DnaJ; upon interaction with the DnaJ-bound protein, DnaK hydrolyzes its bound ATP, resulting in the formation of a stable complex. GrpE releases ADP from DnaK; ATP binding to DnaK triggers the release of the substrate protein, thus completing the reaction cycle. Several rounds of ATP-dependent interactions between DnaJ, DnaK and GrpE are required for fully efficient folding. Also involved, together with DnaK and GrpE, in the DNA replication of plasmids through activation of initiation proteins. The sequence is that of Chaperone protein DnaJ from Escherichia coli (strain K12 / DH10B).